The sequence spans 595 residues: NADH-quinone oxidoreductase subunit C/D (595 aa).

The segment at 1 to 186 (MAETDIAMPE…TPYMQDKAKQ (186 aa)) is NADH dehydrogenase I subunit C. The interval 210–595 (DFMFLNLGPN…IDVVMADVDR (386 aa)) is NADH dehydrogenase I subunit D.

It in the N-terminal section; belongs to the complex I 30 kDa subunit family. This sequence in the C-terminal section; belongs to the complex I 49 kDa subunit family. In terms of assembly, NDH-1 is composed of 13 different subunits. Subunits NuoB, CD, E, F, and G constitute the peripheral sector of the complex.

Its subcellular location is the cell inner membrane. It carries out the reaction a quinone + NADH + 5 H(+)(in) = a quinol + NAD(+) + 4 H(+)(out). Its function is as follows. NDH-1 shuttles electrons from NADH, via FMN and iron-sulfur (Fe-S) centers, to quinones in the respiratory chain. The immediate electron acceptor for the enzyme in this species is believed to be ubiquinone. Couples the redox reaction to proton translocation (for every two electrons transferred, four hydrogen ions are translocated across the cytoplasmic membrane), and thus conserves the redox energy in a proton gradient. In Acinetobacter baumannii (strain AYE), this protein is NADH-quinone oxidoreductase subunit C/D.